The primary structure comprises 540 residues: CWF19-like protein 1 (540 aa).

The interval 265 to 326 is disordered; it reads ENPYRKSDKD…AKQPRKHPQP (62 aa). Residues 267–277 show a composition bias toward basic and acidic residues; it reads PYRKSDKDTPK.

It belongs to the CWF19 family.

In Xenopus laevis (African clawed frog), this protein is CWF19-like protein 1 (cwf19l1).